The following is a 308-amino-acid chain: Methionyl-tRNA formyltransferase (308 aa).

109-112 contributes to the (6S)-5,6,7,8-tetrahydrofolate binding site; it reads SLLP.

This sequence belongs to the Fmt family.

It carries out the reaction L-methionyl-tRNA(fMet) + (6R)-10-formyltetrahydrofolate = N-formyl-L-methionyl-tRNA(fMet) + (6S)-5,6,7,8-tetrahydrofolate + H(+). Its function is as follows. Attaches a formyl group to the free amino group of methionyl-tRNA(fMet). The formyl group appears to play a dual role in the initiator identity of N-formylmethionyl-tRNA by promoting its recognition by IF2 and preventing the misappropriation of this tRNA by the elongation apparatus. In Salinispora tropica (strain ATCC BAA-916 / DSM 44818 / JCM 13857 / NBRC 105044 / CNB-440), this protein is Methionyl-tRNA formyltransferase.